The following is a 423-amino-acid chain: Putative competence-damage inducible protein (423 aa).

Belongs to the CinA family.

The chain is Putative competence-damage inducible protein from Streptococcus pyogenes serotype M18 (strain MGAS8232).